The primary structure comprises 307 residues: Heme A synthase (307 aa).

Over 1–6 (MKFALR) the chain is Cytoplasmic. A helical membrane pass occupies residues 7-27 (LLSVITTFVMLIVLIGGALVT). The Extracellular segment spans residues 28–65 (KTGSGLGCGRQWPLCHGRFFPEMNPASIIEWSHRMSTG). An intrachain disulfide couples C35 to C42. Residue E57 is part of the active site. H60 contacts heme o. A helical membrane pass occupies residues 66 to 86 (VSTILVLALAVLCWKKISPVF). At 87-92 (RETKFL) the chain is on the cytoplasmic side. Residues 93–113 (VIMSIIFLLLQALLGALAVVF) traverse the membrane as a helical segment. Residues 114–121 (GSNALVMA) are Extracellular-facing. A helical membrane pass occupies residues 122-142 (LHFGISLISFASVLLLALLVF). H123 provides a ligand contact to heme o. Over 143–161 (EATRSETKLVKPLHIGKKM) the chain is Cytoplasmic. Residues 162–182 (QFHIYGLITYTYIVVYTGAYV) form a helical membrane-spanning segment. At 183-216 (RHTKSSLACSVFPFCSKDGALPAYFNQWVQMSHR) the chain is on the extracellular side. C191 and C197 are disulfide-bonded. H215 provides a ligand contact to heme b. Residues 217–237 (AAALLLFVWIFVAMFHAMKHY) form a helical membrane-spanning segment. Topologically, residues 238 to 242 (KEQKQ) are cytoplasmic. Residues 243 to 263 (LYYGWIISAILITLQAISGVM) form a helical membrane-spanning segment. Residues 264-274 (SVYSQLALGYA) are Extracellular-facing. A helical membrane pass occupies residues 275–295 (LAHSFFISCLFGVLCYFCLLI). A heme b-binding site is contributed by H277. The Cytoplasmic segment spans residues 296–307 (ARFKYESKEPFK).

It belongs to the COX15/CtaA family. Type 1 subfamily. Interacts with CtaB. Heme b serves as cofactor.

Its subcellular location is the cell membrane. It carries out the reaction Fe(II)-heme o + 2 A + H2O = Fe(II)-heme a + 2 AH2. The protein operates within porphyrin-containing compound metabolism; heme A biosynthesis; heme A from heme O: step 1/1. Its function is as follows. Catalyzes the conversion of heme O to heme A by two successive hydroxylations of the methyl group at C8. The first hydroxylation forms heme I, the second hydroxylation results in an unstable dihydroxymethyl group, which spontaneously dehydrates, resulting in the formyl group of heme A. The protein is Heme A synthase of Bacillus pumilus (strain SAFR-032).